Reading from the N-terminus, the 505-residue chain is Glucan endo-1,3-beta-glucosidase 2 (505 aa).

An N-terminal signal peptide occupies residues 1–20; it reads MASLLHLLLLSLSLLVLASA. Asparagine 97 carries N-linked (GlcNAc...) asparagine glycosylation. Glutamate 125 acts as the Proton donor in catalysis. Residues asparagine 180 and asparagine 262 are each glycosylated (N-linked (GlcNAc...) asparagine). Glutamate 272 serves as the catalytic Nucleophile. Residues asparagine 304, asparagine 361, and asparagine 365 are each glycosylated (N-linked (GlcNAc...) asparagine). Cysteine 369 and cysteine 432 are oxidised to a cystine. N-linked (GlcNAc...) asparagine glycans are attached at residues asparagine 461, asparagine 466, and asparagine 473. The GPI-anchor amidated serine moiety is linked to residue serine 477. Residues 478 to 505 constitute a propeptide, removed in mature form; the sequence is SGIRSDLYYSRGIWSILTVMILNVANIL.

Belongs to the glycosyl hydrolase 17 family. Contains two additional disulfide bonds.

Its subcellular location is the cell membrane. It catalyses the reaction Hydrolysis of (1-&gt;3)-beta-D-glucosidic linkages in (1-&gt;3)-beta-D-glucans.. In Arabidopsis thaliana (Mouse-ear cress), this protein is Glucan endo-1,3-beta-glucosidase 2.